The following is a 201-amino-acid chain: MACGATLKRTLDFDPLLSPASPKRRRCAPLSAPASAAASPAAATAAAAASAAAASPQKYLRMEPSPFGDVSSRLTTEQILYNIKQEYKRMQKRRHLEASFQQTDPGCSSDSQPHAFLISGPASPGTSSATSSPLKKEQPLFTLRQVGMICERLLKEREEKVREEYEEILNTKLAEQYDAFVKFTHDQIMRRYGEQPASYVS.

Phosphoserine is present on residues serine 18 and serine 21. A Nuclear localization signal motif is present at residues 22 to 27; the sequence is PKRRRC. Serine 55 is modified (phosphoserine). The SYVS motif signature appears at 198-201; that stretch reads SYVS.

This sequence belongs to the akirin family. In terms of assembly, homodimer. Interacts with IPO9; the interaction is direct. Associates with 20S and 26S proteasomes. Interacts with SMARCD1; promoting SWI/SNF complex recruitment. Interacts with NFKBIZ. Interacts with YWHAB. Post-translationally, polyubiquitinated. Polyubiquitination is dependent of UBR5 that extends pre-ubiquitinated AKIRIN2. Highly expressed in testis, cerebrum and cerebellum, and barely detectable in liver, heart, spleen and muscle. Also highly expressed in various tumor cells from hepatoma, glioblastoma and pheochromocytoma.

The protein resides in the nucleus. The protein localises to the cytoplasm. Its subcellular location is the membrane. Molecular adapter that acts as a bridge between a variety of multiprotein complexes, and which is involved in embryonic development, immunity, myogenesis and brain development. Plays a key role in nuclear protein degradation by promoting import of proteasomes into the nucleus: directly binds to fully assembled 20S proteasomes at one end and to nuclear import receptor IPO9 at the other end, bridging them together and mediating the import of pre-assembled proteasome complexes through the nuclear pore. Involved in innate immunity by regulating the production of interleukin-6 (IL6) downstream of Toll-like receptor (TLR): acts by bridging the NF-kappa-B inhibitor NFKBIZ and the SWI/SNF complex, leading to promote induction of IL6. Also involved in adaptive immunity by promoting B-cell activation. Involved in brain development: required for the survival and proliferation of cerebral cortical progenitor cells. Involved in myogenesis: required for skeletal muscle formation and skeletal development, possibly by regulating expression of muscle differentiation factors. Also plays a role in facilitating interdigital tissue regression during limb development. The polypeptide is Akirin-2 (Rattus norvegicus (Rat)).